A 554-amino-acid polypeptide reads, in one-letter code: Probable ATP-binding cassette sub-family F member 3 homolog (554 aa).

ABC transporter domains are found at residues 89–285 (GDLH…ASAR) and 351–554 (IEFV…GLGV). ATP contacts are provided by residues 122–129 (GRNGIGKT) and 383–390 (GANGQGKS).

This sequence belongs to the ABC transporter superfamily. ABCF family. EF3 subfamily.

In Encephalitozoon cuniculi (strain GB-M1) (Microsporidian parasite), this protein is Probable ATP-binding cassette sub-family F member 3 homolog.